The following is a 242-amino-acid chain: Phosducin-like protein 2 (242 aa).

The Phosducin domain occupies 34 to 201; that stretch reads VLRLQKEAMV…LEWKLAEVGA (168 aa). The interval 89-242 is thioredoxin fold; sequence FGELREISGN…SSNSDSEDTK (154 aa).

This sequence belongs to the phosducin family. In terms of assembly, interacts with the CCT chaperonin complex and actin.

The protein resides in the endoplasmic reticulum. Its function is as follows. Essential for male fertility, spermiogenesis and acrosome formation. The sequence is that of Phosducin-like protein 2 (PDCL2) from Bos taurus (Bovine).